Reading from the N-terminus, the 501-residue chain is Cytochrome P450 81F4 (501 aa).

Lys245 is covalently cross-linked (Glycyl lysine isopeptide (Lys-Gly) (interchain with G-Cter in ubiquitin)). Residues 285 to 305 (IIIKGLMLGIMVASSETSALT) form a helical membrane-spanning segment. Cys435 is a binding site for heme.

This sequence belongs to the cytochrome P450 family. Heme serves as cofactor.

Its subcellular location is the membrane. It participates in secondary metabolite biosynthesis. Functionally, involved in indole glucosinolate biosynthesis. Catalyzes hydroxylation reactions of the glucosinolate indole ring. Converts indol-3-yl-methylglucosinolate (I3M) to 1-hydroxy-indol-3-yl-methylglucosinolate (1OH-I3M) intermediate. This hydroxy intermediates is converted to 1-methoxy-indol-3-yl-methylglucosinolate (1MO-I3M) by indole glucosinolate methyltransferase 1 and 2 (IGMT1 and IGMT2). This chain is Cytochrome P450 81F4, found in Arabidopsis thaliana (Mouse-ear cress).